The following is a 398-amino-acid chain: Apolipoprotein L1 (398 aa).

An N-terminal signal peptide occupies residues 1–27; sequence MEGAALLRVSVLCIWMSALFLGVGVRA. A compositionally biased stretch (polar residues) spans 35–47; the sequence is QQNVPSGTDTGDP. Positions 35-55 are disordered; that stretch reads QQNVPSGTDTGDPQSKPLGDW. An N-linked (GlcNAc...) asparagine glycan is attached at Asn-261. The disordered stretch occupies residues 297 to 317; the sequence is PHASASRPRVTEPISAESGEQ. Phosphoserine; by FAM20C is present on residues Ser-311 and Ser-314.

It belongs to the apolipoprotein L family. As to quaternary structure, in plasma, interacts with APOA1 and mainly associated with large high density lipoprotein particles. In terms of processing, phosphorylated by FAM20C in the extracellular medium. Plasma. Found on APOA-I-containing high density lipoprotein (HDL3). Expressed in pancreas, lung, prostate, liver, placenta and spleen.

The protein resides in the secreted. In terms of biological role, may play a role in lipid exchange and transport throughout the body. May participate in reverse cholesterol transport from peripheral cells to the liver. The sequence is that of Apolipoprotein L1 (APOL1) from Homo sapiens (Human).